A 189-amino-acid chain; its full sequence is Protein GrpE (189 aa).

Residues 1–10 show a composition bias toward polar residues; it reads MADEQQQTLD. Residues 1-21 are disordered; that stretch reads MADEQQQTLDPQAPEQTDAPE.

This sequence belongs to the GrpE family. As to quaternary structure, homodimer.

Its subcellular location is the cytoplasm. Functionally, participates actively in the response to hyperosmotic and heat shock by preventing the aggregation of stress-denatured proteins, in association with DnaK and GrpE. It is the nucleotide exchange factor for DnaK and may function as a thermosensor. Unfolded proteins bind initially to DnaJ; upon interaction with the DnaJ-bound protein, DnaK hydrolyzes its bound ATP, resulting in the formation of a stable complex. GrpE releases ADP from DnaK; ATP binding to DnaK triggers the release of the substrate protein, thus completing the reaction cycle. Several rounds of ATP-dependent interactions between DnaJ, DnaK and GrpE are required for fully efficient folding. The polypeptide is Protein GrpE (Pseudomonas paraeruginosa (strain DSM 24068 / PA7) (Pseudomonas aeruginosa (strain PA7))).